A 312-amino-acid chain; its full sequence is Malate dehydrogenase (312 aa).

Residues 7–13 and aspartate 34 each bind NAD(+); that span reads GAAGGIG. Residues arginine 81 and arginine 87 each contribute to the substrate site. NAD(+) contacts are provided by residues asparagine 94 and 117 to 119; that span reads ITN. Positions 119 and 153 each coordinate substrate. Histidine 177 serves as the catalytic Proton acceptor. Methionine 227 contributes to the NAD(+) binding site.

This sequence belongs to the LDH/MDH superfamily. MDH type 1 family. Homodimer.

It catalyses the reaction (S)-malate + NAD(+) = oxaloacetate + NADH + H(+). Catalyzes the reversible oxidation of malate to oxaloacetate. This is Malate dehydrogenase from Escherichia coli (strain SE11).